The chain runs to 78 residues: CDC42 small effector protein 1 (78 aa).

S-palmitoyl cysteine attachment occurs at residues cysteine 10 and cysteine 11. Residues 30–43 (IGEPMNFVHLTHIG) form the CRIB domain.

This sequence belongs to the CDC42SE/SPEC family.

It is found in the cytoplasm. It localises to the cytoskeleton. The protein localises to the cell membrane. In terms of biological role, probably involved in the organization of the actin cytoskeleton by acting downstream of CDC42, inducing actin filament assembly. The polypeptide is CDC42 small effector protein 1 (CDC42SE1) (Gallus gallus (Chicken)).